The following is a 277-amino-acid chain: Large ribosomal subunit protein uL2cz/uL2cy (277 aa).

2 disordered regions span residues 1–31 and 227–277; these read MAIH…NTRK and NPVD…RRSK.

The protein belongs to the universal ribosomal protein uL2 family. Part of the 50S ribosomal subunit.

It is found in the plastid. Its subcellular location is the chloroplast. The protein is Large ribosomal subunit protein uL2cz/uL2cy (rpl2-A) of Manihot esculenta (Cassava).